Here is a 411-residue protein sequence, read N- to C-terminus: Multifunctional CCA protein (411 aa).

2 residues coordinate ATP: Gly-8 and Arg-11. Residues Gly-8 and Arg-11 each contribute to the CTP site. Mg(2+)-binding residues include Glu-21 and Asp-23. ATP contacts are provided by Arg-91, Arg-137, and Arg-140. CTP-binding residues include Arg-91, Arg-137, and Arg-140. The 102-residue stretch at 228–329 (TGVHALLALE…LKTLLALDGL (102 aa)) folds into the HD domain.

Belongs to the tRNA nucleotidyltransferase/poly(A) polymerase family. Bacterial CCA-adding enzyme type 1 subfamily. Monomer. Can also form homodimers and oligomers. Requires Mg(2+) as cofactor. Ni(2+) is required as a cofactor.

It catalyses the reaction a tRNA precursor + 2 CTP + ATP = a tRNA with a 3' CCA end + 3 diphosphate. The catalysed reaction is a tRNA with a 3' CCA end + 2 CTP + ATP = a tRNA with a 3' CCACCA end + 3 diphosphate. Catalyzes the addition and repair of the essential 3'-terminal CCA sequence in tRNAs without using a nucleic acid template. Adds these three nucleotides in the order of C, C, and A to the tRNA nucleotide-73, using CTP and ATP as substrates and producing inorganic pyrophosphate. tRNA 3'-terminal CCA addition is required both for tRNA processing and repair. Also involved in tRNA surveillance by mediating tandem CCA addition to generate a CCACCA at the 3' terminus of unstable tRNAs. While stable tRNAs receive only 3'-terminal CCA, unstable tRNAs are marked with CCACCA and rapidly degraded. The sequence is that of Multifunctional CCA protein from Teredinibacter turnerae (strain ATCC 39867 / T7901).